We begin with the raw amino-acid sequence, 483 residues long: Aspartyl/glutamyl-tRNA(Asn/Gln) amidotransferase subunit B (483 aa).

The protein belongs to the GatB/GatE family. GatB subfamily. As to quaternary structure, heterotrimer of A, B and C subunits.

The catalysed reaction is L-glutamyl-tRNA(Gln) + L-glutamine + ATP + H2O = L-glutaminyl-tRNA(Gln) + L-glutamate + ADP + phosphate + H(+). It carries out the reaction L-aspartyl-tRNA(Asn) + L-glutamine + ATP + H2O = L-asparaginyl-tRNA(Asn) + L-glutamate + ADP + phosphate + 2 H(+). Allows the formation of correctly charged Asn-tRNA(Asn) or Gln-tRNA(Gln) through the transamidation of misacylated Asp-tRNA(Asn) or Glu-tRNA(Gln) in organisms which lack either or both of asparaginyl-tRNA or glutaminyl-tRNA synthetases. The reaction takes place in the presence of glutamine and ATP through an activated phospho-Asp-tRNA(Asn) or phospho-Glu-tRNA(Gln). The chain is Aspartyl/glutamyl-tRNA(Asn/Gln) amidotransferase subunit B from Rickettsia bellii (strain RML369-C).